The chain runs to 162 residues: Small ribosomal subunit protein uS9 (162 aa).

This sequence belongs to the universal ribosomal protein uS9 family.

This is Small ribosomal subunit protein uS9 from Parvibaculum lavamentivorans (strain DS-1 / DSM 13023 / NCIMB 13966).